The primary structure comprises 1654 residues: Microtubule cross-linking factor 2 (1654 aa).

A disordered region spans residues Met-1–Arg-188. A compositionally biased stretch (low complexity) spans Gly-55–Ala-66. A compositionally biased stretch (pro residues) spans Gly-102–Ser-113. Positions Leu-132–Gly-147 are enriched in low complexity. A required for association with Golgi apparatus membrane region spans residues Pro-209–Leu-238. Coiled coils occupy residues Leu-216 to Arg-279, Ser-308 to Glu-349, Leu-448 to Glu-546, Ile-816 to Leu-843, and Ser-1079 to Ala-1113. The tract at residues Thr-348 to Ser-379 is disordered. Residues Ser-1122–Val-1145 are compositionally biased toward basic and acidic residues. The interval Ser-1122–Ser-1146 is disordered. Phosphoserine is present on residues Ser-1165 and Ser-1251. The segment at Leu-1406–Lys-1505 is KR-rich domain required for microtubules binding. Disordered regions lie at residues Arg-1427 to Thr-1450, Pro-1537 to Pro-1560, and Asn-1627 to Gln-1654. A compositionally biased stretch (basic residues) spans Thr-1628–Leu-1638.

The protein belongs to the MTCL family. As to quaternary structure, interacts with CLASP2. Interacts with CLASP1. The C-terminal SOGA 25 kDa form occurs as a monomer. In terms of processing, proteolytically cleaved into a C-terminal SOGA 25 kDa form that is detected in plasma. Proteolytically cleaved in primary hepatocytes into a C-terminal SOGA 80 kDa form. Phosphorylated during mitosis in a CDK1-dependent manner. In terms of tissue distribution, expressed in liver (at protein level).

The protein resides in the secreted. It localises to the cytoplasm. Its subcellular location is the cytoskeleton. The protein localises to the golgi apparatus membrane. It is found in the midbody. Microtubule-associated factor that enables integration of the centrosomal and Golgi-associated microtubules on the Golgi membrane, supporting directional migration. Preferentially acts on the perinuclear microtubules accumulated around the Golgi. Associates with the Golgi membrane through the N-terminal coiled-coil region and directly binds microtubules through the C-terminal domain. Required for faithful chromosome segregation during mitosis. Regulates autophagy by playing a role in the reduction of glucose production in an adiponectin- and insulin-dependent manner. The sequence is that of Microtubule cross-linking factor 2 (Mtcl2) from Mus musculus (Mouse).